A 362-amino-acid chain; its full sequence is Severin (362 aa).

Residues 53 to 102 (FKVVPVPESSYGKFYDGDSYIILHTFKEGNSLKHDIHFFLGTFTTQDEAG) form a Gelsolin-like 1 repeat. 162 to 170 (RLLHISGDK) is an a 1,2-diacyl-sn-glycero-3-phospho-(1D-myo-inositol-4,5-bisphosphate) binding site. Gelsolin-like repeat units follow at residues 172 to 212 (AKVA…QEKN) and 280 to 323 (LKFS…NEKK).

The protein belongs to the villin/gelsolin family.

Functionally, severin blocks the ends of F-actin and causes the fragmentation and depolymerization of actin filaments in a Ca(2+) dependent manner. The protein is Severin (sevA) of Dictyostelium discoideum (Social amoeba).